An 89-amino-acid chain; its full sequence is Small ribosomal subunit protein uS15 (89 aa).

Belongs to the universal ribosomal protein uS15 family. Part of the 30S ribosomal subunit. Forms a bridge to the 50S subunit in the 70S ribosome, contacting the 23S rRNA.

Its function is as follows. One of the primary rRNA binding proteins, it binds directly to 16S rRNA where it helps nucleate assembly of the platform of the 30S subunit by binding and bridging several RNA helices of the 16S rRNA. Functionally, forms an intersubunit bridge (bridge B4) with the 23S rRNA of the 50S subunit in the ribosome. The polypeptide is Small ribosomal subunit protein uS15 (Bifidobacterium animalis subsp. lactis (strain AD011)).